The chain runs to 142 residues: Prefoldin subunit alpha 2 (142 aa).

This sequence belongs to the prefoldin subunit alpha family. Heterohexamer of two alpha and four beta subunits.

It is found in the cytoplasm. Molecular chaperone capable of stabilizing a range of proteins. Seems to fulfill an ATP-independent, HSP70-like function in archaeal de novo protein folding. The protein is Prefoldin subunit alpha 2 of Thermococcus kodakarensis (strain ATCC BAA-918 / JCM 12380 / KOD1) (Pyrococcus kodakaraensis (strain KOD1)).